We begin with the raw amino-acid sequence, 253 residues long: Tryptophan synthase alpha chain (253 aa).

Residues E45 and D56 each act as proton acceptor in the active site.

The protein belongs to the TrpA family. In terms of assembly, tetramer of two alpha and two beta chains.

It carries out the reaction (1S,2R)-1-C-(indol-3-yl)glycerol 3-phosphate + L-serine = D-glyceraldehyde 3-phosphate + L-tryptophan + H2O. It functions in the pathway amino-acid biosynthesis; L-tryptophan biosynthesis; L-tryptophan from chorismate: step 5/5. The alpha subunit is responsible for the aldol cleavage of indoleglycerol phosphate to indole and glyceraldehyde 3-phosphate. This chain is Tryptophan synthase alpha chain, found in Flavobacterium psychrophilum (strain ATCC 49511 / DSM 21280 / CIP 103535 / JIP02/86).